Consider the following 212-residue polypeptide: FMN-dependent NAD(P)H:quinone oxidoreductase 1 (212 aa).

FMN contacts are provided by residues Ser10, Ser16–Ser18, and Met97–Phe100. Residues Asn99 and Tyr131 each contribute to the substrate site. FMN contacts are provided by residues Ser145–Gly148 and Glu187. Glu188 is a binding site for substrate.

Belongs to the azoreductase type 1 family. In terms of assembly, homodimer. Homotetramer formed by a dimer of dimers when the ionic strength is high. The cofactor is FMN.

It carries out the reaction 2 a quinone + NADPH + H(+) = 2 a 1,4-benzosemiquinone + NADP(+). The catalysed reaction is 2 a quinone + NADH + H(+) = 2 a 1,4-benzosemiquinone + NAD(+). The enzyme catalyses N,N-dimethyl-1,4-phenylenediamine + anthranilate + 2 NAD(+) = 2-(4-dimethylaminophenyl)diazenylbenzoate + 2 NADH + 2 H(+). With respect to regulation, azoreductase activity increases with salt strength. Quinone reductase that provides resistance to thiol-specific stress caused by electrophilic quinones. Shows a preference for benzoquinones. In terms of biological role, also exhibits azoreductase activity. Catalyzes the reductive cleavage of the azo bond in aromatic azo compounds to the corresponding amines. NADPH is the preferred electron donor for azoreductase activity, but it can also use NADH. Can reduce different classes of azo dyes, including the common azo dyes methyl red and p-aminoazobenzene sulfonamide (PAABSA). Can activate several azo pro-drugs used in the treatment of inflammatory bowel disease (IBD), including balsalazide, sulfasalazine and olsalazine. Also acts as a nitrodeductase, and can reduce and hence activate the nitroaromatic drug nitrofurazone, a broad spectrum antibiotic. The sequence is that of FMN-dependent NAD(P)H:quinone oxidoreductase 1 from Pseudomonas aeruginosa (strain ATCC 15692 / DSM 22644 / CIP 104116 / JCM 14847 / LMG 12228 / 1C / PRS 101 / PAO1).